Here is a 520-residue protein sequence, read N- to C-terminus: Protein OS-9 homolog (520 aa).

The N-terminal stretch at 1 to 23 is a signal peptide; that stretch reads MIRRIRTLTPLLVLACAGSGAWA. The segment covering 121–135 has biased composition (polar residues); that stretch reads QVDNGNRDQTNGAES. A disordered region spans residues 121 to 144; the sequence is QVDNGNRDQTNGAESTSKEDEQRE. The MRH domain maps to 161 to 302; sequence GKCMYYISGW…VIYTPRLCND (142 aa). Cys163 and Cys176 are joined by a disulfide. A mannooligosaccharide derivative contacts are provided by Trp170, Trp171, Gln183, Asp257, Arg263, Glu284, and Tyr290. Intrachain disulfides connect Cys256–Cys288 and Cys271–Cys300. The interval 442-520 is disordered; the sequence is GLVGTVDSND…SEEIFFKDEL (79 aa). Positions 461–471 are enriched in polar residues; that stretch reads GSISQPAQGTT. A compositionally biased stretch (basic and acidic residues) spans 473–499; that stretch reads DKGESNAETGEEKKKADEKIDHYEPEK. A Prevents secretion from ER motif is present at residues 517–520; that stretch reads KDEL.

It belongs to the OS-9 family. As to quaternary structure, interacts with missfolded ER lumenal proteins.

It localises to the endoplasmic reticulum membrane. Functionally, lectin involved in the quality control of the secretory pathway. As a member of the endoplasmic reticulum-associated degradation lumenal (ERAD-L) surveillance system, targets misfolded endoplasmic reticulum lumenal glycoproteins for degradation. The protein is Protein OS-9 homolog (yos9) of Aspergillus fumigatus (strain ATCC MYA-4609 / CBS 101355 / FGSC A1100 / Af293) (Neosartorya fumigata).